We begin with the raw amino-acid sequence, 580 residues long: 2-succinyl-5-enolpyruvyl-6-hydroxy-3-cyclohexene-1-carboxylate synthase (580 aa).

The protein belongs to the TPP enzyme family. MenD subfamily. As to quaternary structure, homodimer. The cofactor is Mg(2+). Requires Mn(2+) as cofactor. Thiamine diphosphate is required as a cofactor.

It catalyses the reaction isochorismate + 2-oxoglutarate + H(+) = 5-enolpyruvoyl-6-hydroxy-2-succinyl-cyclohex-3-ene-1-carboxylate + CO2. The protein operates within quinol/quinone metabolism; 1,4-dihydroxy-2-naphthoate biosynthesis; 1,4-dihydroxy-2-naphthoate from chorismate: step 2/7. It participates in quinol/quinone metabolism; menaquinone biosynthesis. In terms of biological role, catalyzes the thiamine diphosphate-dependent decarboxylation of 2-oxoglutarate and the subsequent addition of the resulting succinic semialdehyde-thiamine pyrophosphate anion to isochorismate to yield 2-succinyl-5-enolpyruvyl-6-hydroxy-3-cyclohexene-1-carboxylate (SEPHCHC). The chain is 2-succinyl-5-enolpyruvyl-6-hydroxy-3-cyclohexene-1-carboxylate synthase from Bacillus pumilus (strain SAFR-032).